Reading from the N-terminus, the 169-residue chain is Transcription antitermination protein NusB (169 aa).

Residues 147 to 169 form a disordered region; it reads RGLIDQSFSRPQKPESEATEIEE.

The protein belongs to the NusB family.

Its function is as follows. Involved in transcription antitermination. Required for transcription of ribosomal RNA (rRNA) genes. Binds specifically to the boxA antiterminator sequence of the ribosomal RNA (rrn) operons. In Chlorobium chlorochromatii (strain CaD3), this protein is Transcription antitermination protein NusB.